Reading from the N-terminus, the 949-residue chain is Isoleucine--tRNA ligase (949 aa).

The short motif at 58 to 68 (PYANGDIHIGH) is the 'HIGH' region element. Glu567 is an L-isoleucyl-5'-AMP binding site. Positions 608–612 (KMSKS) match the 'KMSKS' region motif. Lys611 provides a ligand contact to ATP. The Zn(2+) site is built by Cys912, Cys915, Cys932, and Cys935.

This sequence belongs to the class-I aminoacyl-tRNA synthetase family. IleS type 1 subfamily. In terms of assembly, monomer. Requires Zn(2+) as cofactor.

It localises to the cytoplasm. It catalyses the reaction tRNA(Ile) + L-isoleucine + ATP = L-isoleucyl-tRNA(Ile) + AMP + diphosphate. Functionally, catalyzes the attachment of isoleucine to tRNA(Ile). As IleRS can inadvertently accommodate and process structurally similar amino acids such as valine, to avoid such errors it has two additional distinct tRNA(Ile)-dependent editing activities. One activity is designated as 'pretransfer' editing and involves the hydrolysis of activated Val-AMP. The other activity is designated 'posttransfer' editing and involves deacylation of mischarged Val-tRNA(Ile). The sequence is that of Isoleucine--tRNA ligase from Vibrio cholerae serotype O1 (strain ATCC 39315 / El Tor Inaba N16961).